Here is a 261-residue protein sequence, read N- to C-terminus: Glucose 1-dehydrogenase A (261 aa).

11–35 (VITGGSTGLGRAMAVRFGQEEAKVV) serves as a coordination point for NADP(+). Serine 145 is a binding site for substrate. Catalysis depends on tyrosine 158, which acts as the Proton acceptor.

This sequence belongs to the short-chain dehydrogenases/reductases (SDR) family. As to quaternary structure, homotetramer.

The enzyme catalyses D-glucose + NAD(+) = D-glucono-1,5-lactone + NADH + H(+). It catalyses the reaction D-glucose + NADP(+) = D-glucono-1,5-lactone + NADPH + H(+). This Priestia megaterium (Bacillus megaterium) protein is Glucose 1-dehydrogenase A (gdhA).